Reading from the N-terminus, the 247-residue chain is MyoD family inhibitor domain-containing protein (247 aa).

Disordered stretches follow at residues 1–67 (MSCA…NPSA) and 80–110 (QLQT…GNGI). Residues 74-247 (QPERLPQLQT…MECCGICFPS (174 aa)) enclose the MDFI domain. Phosphoserine occurs at positions 129 and 141.

The protein belongs to the MDFI family. As to quaternary structure, interacts with HAND1; the interaction sequesters Hand1 into the nucleolus and inhibits its activity. Interacts (via C-terminus) with ZIC2. Interacts (via C-terminus) with AXIN1, the histidine-rich region of CCNT1/cyclin-T and weakly with LEF1. Interacts with CCNT2. Interacts with GATA2. Interacts (via C-terminus) with Piezo channel composed of PIEZO1 or PIEZO2; the interaction prolongs Piezo channel inactivation. Post-translationally, palmitoylated. As to expression, in the embryo, robust expression is detected between 16.5 and 18.5 dpc in lung, kidney, and salivary glands. In the developing cardiovascular system, it is detected in lymphatic and cardiac valves (at protein level).

It localises to the cytoplasm. Its subcellular location is the secreted. Its function is as follows. Required to control the activity of various transcription factors through their sequestration in the cytoplasm. Retains nuclear Zic proteins ZIC1, ZIC2 and ZIC3 in the cytoplasm and inhibits their transcriptional activation. Modulates the expression from cellular promoters. Binds to the axin complex, resulting in an increase in the level of free beta-catenin. Affects axin-regulation of the WNT and JNK signaling pathways. Involved in the development of lymphatic vessel valves. Required to promote lymphatic endothelial cell migration, in a process that involves down-regulation of integrin beta 1 activation and control of cell adhesion to the extracellular matrix. Regulates the activity of mechanosensitive Piezo channel. This is MyoD family inhibitor domain-containing protein from Mus musculus (Mouse).